The chain runs to 709 residues: Translation initiation factor IF-2 (709 aa).

2 stretches are compositionally biased toward basic and acidic residues: residues 47 to 70 (DHQYRPNTGKKEEKKAEKKTEKPK) and 105 to 121 (KGKETKKTEAQQQEKKL). The disordered stretch occupies residues 47–157 (DHQYRPNTGK…QPAKKEKELP (111 aa)). The segment covering 125-137 (AKKKGKGPAKGKK) has biased composition (basic residues). The span at 138–149 (QAAPAAKQAPQP) shows a compositional bias: low complexity. Residues 240–409 (ERPPVVTIMG…LLVSEMEELK (170 aa)) form the tr-type G domain. Residues 249-256 (GHVDHGKT) are G1. GTP is bound at residue 249 to 256 (GHVDHGKT). Residues 274-278 (GITQH) are G2. The G3 stretch occupies residues 295–298 (DTPG). Residues 295-299 (DTPGH) and 349-352 (NKID) each bind GTP. The interval 349–352 (NKID) is G4. Positions 385-387 (SAK) are G5.

This sequence belongs to the TRAFAC class translation factor GTPase superfamily. Classic translation factor GTPase family. IF-2 subfamily.

It localises to the cytoplasm. Its function is as follows. One of the essential components for the initiation of protein synthesis. Protects formylmethionyl-tRNA from spontaneous hydrolysis and promotes its binding to the 30S ribosomal subunits. Also involved in the hydrolysis of GTP during the formation of the 70S ribosomal complex. The sequence is that of Translation initiation factor IF-2 from Geobacillus kaustophilus (strain HTA426).